The sequence spans 680 residues: Zinc finger protein 263 (680 aa).

Residue Lys19 forms a Glycyl lysine isopeptide (Lys-Gly) (interchain with G-Cter in SUMO2) linkage. Residues 43–125 (HLRFRRFRFQ…TLVERMQKEL (83 aa)) form the SCAN box domain. Residues 147-191 (LPLETAGESPSFKLEPMETERSPGPRLQELLDPSPQRDSQAVKER) form a disordered region. Residue Lys159 forms a Glycyl lysine isopeptide (Lys-Gly) (interchain with G-Cter in SUMO2) linkage. 2 positions are modified to phosphoserine: Ser168 and Ser180. Glycyl lysine isopeptide (Lys-Gly) (interchain with G-Cter in SUMO2) cross-links involve residues Lys286, Lys300, and Lys376. 5 consecutive C2H2-type zinc fingers follow at residues 378-400 (HLCA…QRIH), 434-456 (HKCL…QRTH), 462-484 (FQCN…QRTH), 490-512 (YKCP…QRIH), and 518-540 (YRCS…ERTH). Glycyl lysine isopeptide (Lys-Gly) (interchain with G-Cter in SUMO2) cross-links involve residues Lys570 and Lys579. C2H2-type zinc fingers lie at residues 572–594 (FECS…QRTH), 600–622 (YKCI…QRIH), 628–650 (YTCH…LRTH), and 656–678 (YKCS…QRTH).

It belongs to the krueppel C2H2-type zinc-finger protein family. As to quaternary structure, interacts with a number of proteins involved in chromatin modification and transcriptional corepression including DNMT1, DNMT3A, HDAC2, PHF8, TRIM28/KAP1, SETDB1, EZH2, UHRF1, CBX3/HP1-gamma, and CBX5/HP1-alpha; recruits these proteins to the SIX3 promoter region, leading to SIX3 transcriptional repression. Interacts with MAPK3/ERK1 and MAPK1/ERK2. Ubiquitinated, leading to proteasomal degradation. In terms of tissue distribution, expressed in Purkinje cells in the brain (at protein level).

The protein localises to the nucleus. Functionally, transcription factor that binds to the consensus sequence 5'-TCCTCCC-3' and acts as a transcriptional repressor. Binds to the promoter region of SIX3 and recruits other proteins involved in chromatin modification and transcriptional corepression, resulting in methylation of the promoter and transcriptional repression. Acts as a transcriptional repressor of HS3ST1 and HS3ST3A1 via binding to gene promoter regions. The sequence is that of Zinc finger protein 263 from Mus musculus (Mouse).